Reading from the N-terminus, the 185-residue chain is Probable RNA polymerase sigma-C factor (185 aa).

A Polymerase core binding motif is present at residues 52 to 65; sequence DLTQETFLRAIGAI. The H-T-H motif DNA-binding region spans 149–168; the sequence is YADAAAVCGCPVGTIRSRVA.

The protein belongs to the sigma-70 factor family. ECF subfamily.

Functionally, sigma factors are initiation factors that promote the attachment of RNA polymerase to specific initiation sites and are then released. This chain is Probable RNA polymerase sigma-C factor (sigC), found in Mycobacterium bovis (strain ATCC BAA-935 / AF2122/97).